The chain runs to 353 residues: Photosystem II D2 protein (353 aa).

At Thr2 the chain carries N-acetylthreonine. Position 2 is a phosphothreonine (Thr2). A helical transmembrane segment spans residues 41 to 61 (CAYFALGGWFTGTTFVTSWYT). Position 118 (His118) interacts with chlorophyll a. Residues 125-141 (GFMLRQFELARSVQLRP) form a helical membrane-spanning segment. 2 residues coordinate pheophytin a: Gln130 and Asn143. The helical transmembrane segment at 153–166 (VFVSVFLIYPLGQS) threads the bilayer. His198 contacts chlorophyll a. The helical transmembrane segment at 208–228 (AALLCAIHGATVENTLFEDGD) threads the bilayer. A plastoquinone contacts are provided by His215 and Phe262. His215 provides a ligand contact to Fe cation. His269 is a binding site for Fe cation. Residues 279-295 (GLWMSAIGVVGLALNLR) form a helical membrane-spanning segment.

This sequence belongs to the reaction center PufL/M/PsbA/D family. As to quaternary structure, PSII is composed of 1 copy each of membrane proteins PsbA, PsbB, PsbC, PsbD, PsbE, PsbF, PsbH, PsbI, PsbJ, PsbK, PsbL, PsbM, PsbT, PsbX, PsbY, PsbZ, Psb30/Ycf12, at least 3 peripheral proteins of the oxygen-evolving complex and a large number of cofactors. It forms dimeric complexes. The D1/D2 heterodimer binds P680, chlorophylls that are the primary electron donor of PSII, and subsequent electron acceptors. It shares a non-heme iron and each subunit binds pheophytin, quinone, additional chlorophylls, carotenoids and lipids. There is also a Cl(-1) ion associated with D1 and D2, which is required for oxygen evolution. The PSII complex binds additional chlorophylls, carotenoids and specific lipids. serves as cofactor.

It localises to the plastid. Its subcellular location is the chloroplast thylakoid membrane. The catalysed reaction is 2 a plastoquinone + 4 hnu + 2 H2O = 2 a plastoquinol + O2. Photosystem II (PSII) is a light-driven water:plastoquinone oxidoreductase that uses light energy to abstract electrons from H(2)O, generating O(2) and a proton gradient subsequently used for ATP formation. It consists of a core antenna complex that captures photons, and an electron transfer chain that converts photonic excitation into a charge separation. The D1/D2 (PsbA/PsbD) reaction center heterodimer binds P680, the primary electron donor of PSII as well as several subsequent electron acceptors. D2 is needed for assembly of a stable PSII complex. In Cryptomeria japonica (Japanese cedar), this protein is Photosystem II D2 protein.